The sequence spans 122 residues: Lectin A (122 aa).

Tyr38 contributes to the Ca(2+) binding site. An alpha-D-galactoside contacts are provided by Glu44, Gln57, and Asp96. Positions 96, 100, 103, and 104 each coordinate Ca(2+). Asp103 lines the an alpha-D-galactoside pocket.

The protein belongs to the LecA/PllA lectin family. As to quaternary structure, homotetramer.

Its function is as follows. Lectin that specifically binds alpha-galactoside-terminating glycoconjugates. Shows high apparent binding to the alpha-Gal epitope (Gal-alpha-1,3-Gal-beta-1,4-GlcNAc terminating glycans) as well as to Gal-alpha-1,4-GlcNAc and Gal-alpha-1,3-GalNAc. Gal-alpha-1,3-GalNAc may be one natural ligand bound by PllA both in the nematode symbiont and in infected insects. This Photorhabdus laumondii subsp. laumondii (strain DSM 15139 / CIP 105565 / TT01) (Photorhabdus luminescens subsp. laumondii) protein is Lectin A.